Here is a 614-residue protein sequence, read N- to C-terminus: RNA polymerase sigma factor RpoD (614 aa).

Residues 178–222 are disordered; the sequence is THIGSDLSQSERDKDDSKDDSKDDDEDEEEEGPKGPDPEESKERF. The segment covering 186–198 has biased composition (basic and acidic residues); the sequence is QSERDKDDSKDDS. Residues 199 to 208 are compositionally biased toward acidic residues; sequence KDDDEDEEEE. A compositionally biased stretch (basic and acidic residues) spans 209-222; that stretch reads GPKGPDPEESKERF. The segment at 380-450 is sigma-70 factor domain-2; that stretch reads MVEANLRLVI…TRSIADQART (71 aa). An Interaction with polymerase core subunit RpoC motif is present at residues 404–407; that stretch reads DLIQ. A sigma-70 factor domain-3 region spans residues 459-535; the sequence is ETINKLNRIS…DTTLELPLDS (77 aa). The sigma-70 factor domain-4 stretch occupies residues 548-601; that stretch reads VLAGLTAREAKVLRMRFGIDMNTDHTLEEVGKQFDVTRERIRQIEAKALRKLRH. The segment at residues 574–593 is a DNA-binding region (H-T-H motif); the sequence is LEEVGKQFDVTRERIRQIEA.

Belongs to the sigma-70 factor family. RpoD/SigA subfamily. Interacts transiently with the RNA polymerase catalytic core.

Its subcellular location is the cytoplasm. Sigma factors are initiation factors that promote the attachment of RNA polymerase to specific initiation sites and are then released. This sigma factor is the primary sigma factor during exponential growth. The polypeptide is RNA polymerase sigma factor RpoD (Shewanella violacea (strain JCM 10179 / CIP 106290 / LMG 19151 / DSS12)).